Reading from the N-terminus, the 137-residue chain is NADH dehydrogenase [ubiquinone] 1 beta subcomplex subunit 7 (137 aa).

G2 carries the N-myristoyl glycine lipid modification. Residues 56–98 (RDYCAHHLIRLLKCKRDSFPNFLACKQERHDWDYCEHRDYVMR) enclose the CHCH domain. Residues 59–69 (CAHHLIRLLKC) carry the Cx9C motif 1 motif. Disulfide bonds link C59–C90 and C69–C80. Phosphoserine is present on S73. Positions 80 to 90 (CKQERHDWDYC) match the Cx9C motif 2 motif. The segment at 113-137 (KRREKKAAELAKGQGPGEVDPKVAL) is disordered.

This sequence belongs to the complex I NDUFB7 subunit family. As to quaternary structure, complex I is composed of 45 different subunits.

It localises to the mitochondrion inner membrane. It is found in the mitochondrion intermembrane space. Accessory subunit of the mitochondrial membrane respiratory chain NADH dehydrogenase (Complex I), that is believed not to be involved in catalysis. Complex I functions in the transfer of electrons from NADH to the respiratory chain. The immediate electron acceptor for the enzyme is believed to be ubiquinone. This Homo sapiens (Human) protein is NADH dehydrogenase [ubiquinone] 1 beta subcomplex subunit 7 (NDUFB7).